A 290-amino-acid chain; its full sequence is 4-diphosphocytidyl-2-C-methyl-D-erythritol kinase (290 aa).

Residue Lys20 is part of the active site. 104-114 (PMGGGLGGGSS) is an ATP binding site. Residue Asp146 is part of the active site.

Belongs to the GHMP kinase family. IspE subfamily.

The catalysed reaction is 4-CDP-2-C-methyl-D-erythritol + ATP = 4-CDP-2-C-methyl-D-erythritol 2-phosphate + ADP + H(+). The protein operates within isoprenoid biosynthesis; isopentenyl diphosphate biosynthesis via DXP pathway; isopentenyl diphosphate from 1-deoxy-D-xylulose 5-phosphate: step 3/6. Its function is as follows. Catalyzes the phosphorylation of the position 2 hydroxy group of 4-diphosphocytidyl-2C-methyl-D-erythritol. The chain is 4-diphosphocytidyl-2-C-methyl-D-erythritol kinase from Shewanella frigidimarina (strain NCIMB 400).